Here is a 256-residue protein sequence, read N- to C-terminus: Imidazole glycerol phosphate synthase subunit HisF (256 aa).

Residues Asp13 and Asp132 contribute to the active site.

Belongs to the HisA/HisF family. Heterodimer of HisH and HisF.

It is found in the cytoplasm. The catalysed reaction is 5-[(5-phospho-1-deoxy-D-ribulos-1-ylimino)methylamino]-1-(5-phospho-beta-D-ribosyl)imidazole-4-carboxamide + L-glutamine = D-erythro-1-(imidazol-4-yl)glycerol 3-phosphate + 5-amino-1-(5-phospho-beta-D-ribosyl)imidazole-4-carboxamide + L-glutamate + H(+). Its pathway is amino-acid biosynthesis; L-histidine biosynthesis; L-histidine from 5-phospho-alpha-D-ribose 1-diphosphate: step 5/9. In terms of biological role, IGPS catalyzes the conversion of PRFAR and glutamine to IGP, AICAR and glutamate. The HisF subunit catalyzes the cyclization activity that produces IGP and AICAR from PRFAR using the ammonia provided by the HisH subunit. This chain is Imidazole glycerol phosphate synthase subunit HisF, found in Leptospira borgpetersenii serovar Hardjo-bovis (strain JB197).